Consider the following 682-residue polypeptide: Potassium-transporting ATPase ATP-binding subunit (682 aa).

The next 4 helical transmembrane spans lie at 34 to 54, 62 to 82, 219 to 239, and 254 to 274; these read PVMFIVWIGSLLTTCISIAMA, ALFSAAISGWLWVTVLFANFA, IALTILLIALTIVFLLATATL, and VLVALLVCLIPTTIGGLLSAI. The active-site 4-aspartylphosphate intermediate is the aspartate 307. ATP-binding positions include aspartate 344, glutamate 348, 377 to 384, and lysine 395; that span reads FTAQSRMS. Aspartate 518 and aspartate 522 together coordinate Mg(2+). 3 consecutive transmembrane segments (helical) span residues 588 to 608, 616 to 636, and 656 to 676; these read FAIIPAAFAATYPQLNALNIM, AILSAVIFNALIIVFLIPLAL, and IYGLGGLLVPFIGIKVIDLLL.

The protein belongs to the cation transport ATPase (P-type) (TC 3.A.3) family. Type IA subfamily. In terms of assembly, the system is composed of three essential subunits: KdpA, KdpB and KdpC.

The protein resides in the cell inner membrane. The enzyme catalyses K(+)(out) + ATP + H2O = K(+)(in) + ADP + phosphate + H(+). Part of the high-affinity ATP-driven potassium transport (or Kdp) system, which catalyzes the hydrolysis of ATP coupled with the electrogenic transport of potassium into the cytoplasm. This subunit is responsible for energy coupling to the transport system and for the release of the potassium ions to the cytoplasm. This chain is Potassium-transporting ATPase ATP-binding subunit, found in Shigella boydii serotype 4 (strain Sb227).